We begin with the raw amino-acid sequence, 258 residues long: Transcription factor TT2 (258 aa).

2 consecutive HTH myb-type domains span residues 11–63 (REEL…KNYL) and 64–118 (RPGI…RKRL). DNA-binding regions (H-T-H motif) lie at residues 39 to 63 (WSTLPNQAGLKRCGKSCRLRWKNYL) and 91 to 114 (WSLIAGRLPGRTDNEIKNHWNSNL). An ATP-binding site is contributed by 47-54 (GLKRCGKS).

In terms of assembly, interacts with BHLH2/EGL3/MYC146, BHLH12/MYC1 and BHLH42/TT8. As to expression, expressed at a high level in immature siliques and at a lower level in flowers. Undetected in young seedlings, roots, leaves and inflorescence stems.

Its subcellular location is the nucleus. Its function is as follows. Transcription activator, when associated with BHLH2/EGL3/MYC146, BHLH12/MYC1, or BHLH42/TT8. Involved in the control of flavonoid late metabolism in developing siliques. Plays a key role in determining the tissue-specific activation of leucoanthocyanidin reductase (BANYULS). This is Transcription factor TT2 (TT2) from Arabidopsis thaliana (Mouse-ear cress).